The following is a 963-amino-acid chain: Ubiquitin carboxyl-terminal hydrolase 11 (963 aa).

The disordered stretch occupies residues valine 64–glutamate 93. The segment covering threonine 65–leucine 75 has biased composition (basic and acidic residues). The DUSP domain occupies proline 76–isoleucine 184. An N6-acetyllysine modification is found at lysine 245. The USP domain maps to cysteine 309–glutamine 930. The active-site Nucleophile is the cysteine 318. Disordered regions lie at residues threonine 644 to threonine 691 and leucine 716 to glutamate 735. Serine 648 carries the phosphoserine modification. Residues aspartate 649 to aspartate 665 show a composition bias toward acidic residues. A compositionally biased stretch (polar residues) spans phenylalanine 717 to threonine 731. Serine 733 is modified (phosphoserine). Histidine 888 serves as the catalytic Proton acceptor. The segment covering serine 938–serine 957 has biased composition (low complexity). The interval serine 938–asparagine 963 is disordered. Serine 948 is subject to Phosphoserine.

Belongs to the peptidase C19 family. As to quaternary structure, monomer. Associated component of the Polycomb group (PcG) multiprotein PRC1-like complex. Interacts with RANBP9/RANBPM. Interacts with BRCA2. Interacts with CHUK/IKKA. Interacts with NFKBIA. Interacts with SPRY3, RAE1, MYCBP2/PAM, and KCTD6. In terms of assembly, (Microbial infection) Interacts with papilloma virus protein 16E7.

It localises to the nucleus. It is found in the cytoplasm. The protein localises to the chromosome. The catalysed reaction is Thiol-dependent hydrolysis of ester, thioester, amide, peptide and isopeptide bonds formed by the C-terminal Gly of ubiquitin (a 76-residue protein attached to proteins as an intracellular targeting signal).. Its function is as follows. Protease that can remove conjugated ubiquitin from target proteins and polyubiquitin chains. Inhibits the degradation of target proteins by the proteasome. Cleaves preferentially 'Lys-6' and 'Lys-63'-linked ubiquitin chains. Has lower activity with 'Lys-11' and 'Lys-33'-linked ubiquitin chains, and extremely low activity with 'Lys-27', 'Lys-29' and 'Lys-48'-linked ubiquitin chains (in vitro). Plays a role in the regulation of pathways leading to NF-kappa-B activation. Plays a role in the regulation of DNA repair after double-stranded DNA breaks. Acts as a chromatin regulator via its association with the Polycomb group (PcG) multiprotein PRC1-like complex; may act by deubiquitinating components of the PRC1-like complex. Promotes cell proliferation by deubiquitinating phosphorylated E2F1. This Homo sapiens (Human) protein is Ubiquitin carboxyl-terminal hydrolase 11 (USP11).